The sequence spans 302 residues: tRNA pseudouridine synthase B (302 aa).

Residue aspartate 45 is the Nucleophile of the active site.

It belongs to the pseudouridine synthase TruB family. Type 1 subfamily.

The catalysed reaction is uridine(55) in tRNA = pseudouridine(55) in tRNA. Its function is as follows. Responsible for synthesis of pseudouridine from uracil-55 in the psi GC loop of transfer RNAs. The chain is tRNA pseudouridine synthase B from Francisella tularensis subsp. novicida (strain U112).